Reading from the N-terminus, the 674-residue chain is Enzymatic polyprotein (674 aa).

The interval 40-130 is protease; that stretch reads IELHCFVDTG…CQLYEPFIQF (91 aa). Aspartate 47 is a catalytic residue. The Reverse transcriptase domain maps to 267–447; the sequence is LKVIKPSKSP…KKINFLGLEI (181 aa).

It belongs to the caulimoviridae enzymatic polyprotein family.

The catalysed reaction is DNA(n) + a 2'-deoxyribonucleoside 5'-triphosphate = DNA(n+1) + diphosphate. Encodes for at least two polypeptides: protease (PR) and reverse transcriptase (RT). The protease processes the polyprotein in cis. Reverse transcriptase is multifunctional enzyme that converts the viral RNA genome into dsDNA in viral cytoplasmic capsids. This enzyme displays a DNA polymerase activity that can copy either DNA or RNA templates, and a ribonuclease H (RNase H) activity that cleaves the RNA strand of RNA-DNA heteroduplexes in a partially processive 3'- to 5'-endonucleasic mode. Neo-synthesized pregenomic RNA (pgRNA) are encapsidated, and reverse-transcribed inside the nucleocapsid. Partial (+)DNA is synthesized from the (-)DNA template and generates the relaxed circular DNA (RC-DNA) genome. After budding and infection, the RC-DNA migrates in the nucleus, and is converted into a plasmid-like covalently closed circular DNA (cccDNA). This Arabidopsis thaliana (Mouse-ear cress) protein is Enzymatic polyprotein.